Here is a 388-residue protein sequence, read N- to C-terminus: Protein FAM199X (388 aa).

The span at 288-312 (SMVSSASSSGSSVGNSASNSSANMS) shows a compositional bias: low complexity. Positions 288-358 (SMVSSASSSG…QLKEQRQARK (71 aa)) are disordered. 2 positions are modified to phosphoserine: S316 and S321. A compositionally biased stretch (basic residues) spans 330 to 349 (DSKKRSKQRKLQQKAFRKRQ).

It belongs to the FAM199 family.

The polypeptide is Protein FAM199X (Fam199x) (Mus musculus (Mouse)).